The following is a 158-amino-acid chain: Small ribosomal subunit protein uS7 (158 aa).

This sequence belongs to the universal ribosomal protein uS7 family. In terms of assembly, part of the 30S ribosomal subunit. Contacts proteins S9 and S11.

One of the primary rRNA binding proteins, it binds directly to 16S rRNA where it nucleates assembly of the head domain of the 30S subunit. Is located at the subunit interface close to the decoding center, probably blocks exit of the E-site tRNA. The sequence is that of Small ribosomal subunit protein uS7 from Parabacteroides distasonis (strain ATCC 8503 / DSM 20701 / CIP 104284 / JCM 5825 / NCTC 11152).